Reading from the N-terminus, the 142-residue chain is Large ribosomal subunit protein uL11 (142 aa).

The disordered stretch occupies residues 84 to 103 (AGVKSGSGRPNSDKVGTVTD).

The protein belongs to the universal ribosomal protein uL11 family. Part of the ribosomal stalk of the 50S ribosomal subunit. Interacts with L10 and the large rRNA to form the base of the stalk. L10 forms an elongated spine to which L12 dimers bind in a sequential fashion forming a multimeric L10(L12)X complex. One or more lysine residues are methylated.

Its function is as follows. Forms part of the ribosomal stalk which helps the ribosome interact with GTP-bound translation factors. The chain is Large ribosomal subunit protein uL11 from Aliivibrio salmonicida (strain LFI1238) (Vibrio salmonicida (strain LFI1238)).